The chain runs to 252 residues: Protein BTG3 (252 aa).

The segment at 138-163 (VTSDYHSGSSSSDEDTSKEVDVKPSS) is disordered.

This sequence belongs to the BTG family. As to expression, ubiquitous.

Functionally, overexpression impairs serum-induced cell cycle progression from the G0/G1 to S phase. The protein is Protein BTG3 (Btg3) of Mus musculus (Mouse).